The chain runs to 787 residues: Protein translocase subunit SecA 2 (787 aa).

Residues Q86, 104 to 108 (GEGKT), and D493 contribute to the ATP site.

This sequence belongs to the SecA family. In terms of assembly, monomer and homodimer. Part of the essential Sec protein translocation apparatus which comprises SecA, SecYEG and auxiliary proteins SecDF. Other proteins may also be involved.

Its subcellular location is the cell membrane. It is found in the cytoplasm. The enzyme catalyses ATP + H2O + cellular proteinSide 1 = ADP + phosphate + cellular proteinSide 2.. Its function is as follows. Part of the Sec protein translocase complex. Interacts with the SecYEG preprotein conducting channel. Has a central role in coupling the hydrolysis of ATP to the transfer of proteins into and across the cell membrane, serving as an ATP-driven molecular motor driving the stepwise translocation of polypeptide chains across the membrane. This chain is Protein translocase subunit SecA 2, found in Bacillus thuringiensis subsp. konkukian (strain 97-27).